The primary structure comprises 576 residues: Arginine--tRNA ligase (576 aa).

The short motif at proline 122 to histidine 132 is the 'HIGH' region element.

This sequence belongs to the class-I aminoacyl-tRNA synthetase family. In terms of assembly, monomer.

It localises to the cytoplasm. It carries out the reaction tRNA(Arg) + L-arginine + ATP = L-arginyl-tRNA(Arg) + AMP + diphosphate. This chain is Arginine--tRNA ligase, found in Serratia proteamaculans (strain 568).